Consider the following 126-residue polypeptide: Large ribosomal subunit protein bL12 (126 aa).

This sequence belongs to the bacterial ribosomal protein bL12 family. Homodimer. Part of the ribosomal stalk of the 50S ribosomal subunit. Forms a multimeric L10(L12)X complex, where L10 forms an elongated spine to which 2 to 4 L12 dimers bind in a sequential fashion. Binds GTP-bound translation factors.

Its function is as follows. Forms part of the ribosomal stalk which helps the ribosome interact with GTP-bound translation factors. Is thus essential for accurate translation. This Bordetella avium (strain 197N) protein is Large ribosomal subunit protein bL12.